The following is a 793-amino-acid chain: Probable phosphoketolase (793 aa).

Belongs to the XFP family. It depends on thiamine diphosphate as a cofactor.

The chain is Probable phosphoketolase from Streptomyces avermitilis (strain ATCC 31267 / DSM 46492 / JCM 5070 / NBRC 14893 / NCIMB 12804 / NRRL 8165 / MA-4680).